The primary structure comprises 413 residues: Arginine biosynthesis bifunctional protein ArgJ (413 aa).

The substrate site is built by Thr-158, Lys-184, Thr-195, Glu-285, Asn-408, and Ser-413. The Nucleophile role is filled by Thr-195.

This sequence belongs to the ArgJ family. As to quaternary structure, heterotetramer of two alpha and two beta chains.

Its subcellular location is the cytoplasm. The enzyme catalyses N(2)-acetyl-L-ornithine + L-glutamate = N-acetyl-L-glutamate + L-ornithine. The catalysed reaction is L-glutamate + acetyl-CoA = N-acetyl-L-glutamate + CoA + H(+). The protein operates within amino-acid biosynthesis; L-arginine biosynthesis; L-ornithine and N-acetyl-L-glutamate from L-glutamate and N(2)-acetyl-L-ornithine (cyclic): step 1/1. It functions in the pathway amino-acid biosynthesis; L-arginine biosynthesis; N(2)-acetyl-L-ornithine from L-glutamate: step 1/4. Catalyzes two activities which are involved in the cyclic version of arginine biosynthesis: the synthesis of N-acetylglutamate from glutamate and acetyl-CoA as the acetyl donor, and of ornithine by transacetylation between N(2)-acetylornithine and glutamate. The sequence is that of Arginine biosynthesis bifunctional protein ArgJ from Brucella suis biovar 1 (strain 1330).